Consider the following 191-residue polypeptide: Octanoyltransferase (191 aa).

The BPL/LPL catalytic domain maps to 10-185 (ENSHDEIWLV…NILALLNNPP (176 aa)). Substrate is bound by residues 49–56 (RGGQVTYH), 116–118 (SLG), and 129–131 (GLA). Catalysis depends on C147, which acts as the Acyl-thioester intermediate.

This sequence belongs to the LipB family.

The protein resides in the cytoplasm. The enzyme catalyses octanoyl-[ACP] + L-lysyl-[protein] = N(6)-octanoyl-L-lysyl-[protein] + holo-[ACP] + H(+). It participates in protein modification; protein lipoylation via endogenous pathway; protein N(6)-(lipoyl)lysine from octanoyl-[acyl-carrier-protein]: step 1/2. Catalyzes the transfer of endogenously produced octanoic acid from octanoyl-acyl-carrier-protein onto the lipoyl domains of lipoate-dependent enzymes. Lipoyl-ACP can also act as a substrate although octanoyl-ACP is likely to be the physiological substrate. In Salmonella choleraesuis (strain SC-B67), this protein is Octanoyltransferase.